The following is a 511-amino-acid chain: Putative polyol transporter 2 (511 aa).

A run of 12 helical transmembrane segments spans residues 25–45 (FAFACAILASMTSIILGYDIG), 63–83 (VQLEILMGILNIYSLIGSGAA), 94–114 (YTIVLAGFFFFCGALLMGFAT), 117–137 (PFIMVGRFVAGIGVGYAMMIA), 156–176 (FPEIFINIGILLGYVSNYFFA), 186–206 (FMLGIGAVPSVFLAIGVLAMP), 284–304 (ILIACLGIHFSQQASGIDAVV), 324–344 (LATVAVGVVKTLFIVVGTCLV), 351–371 (ALLLTSMGGMFFSLTALGTSL), 384–404 (WAIGLAVTTVMTFVATFSLGA), 424–444 (GASLGVMLNRLMSGIIGMTFL), and 454–474 (GAFLLFAGVAVAAWVFFFTFL).

Belongs to the major facilitator superfamily. Sugar transporter (TC 2.A.1.1) family.

Its subcellular location is the membrane. Its function is as follows. Plasma membrane sugar-proton symporter. This chain is Putative polyol transporter 2 (PLT2), found in Arabidopsis thaliana (Mouse-ear cress).